We begin with the raw amino-acid sequence, 68 residues long: Large ribosomal subunit protein bL35 (68 aa).

The protein belongs to the bacterial ribosomal protein bL35 family.

This chain is Large ribosomal subunit protein bL35, found in Rickettsia conorii (strain ATCC VR-613 / Malish 7).